Consider the following 384-residue polypeptide: S-adenosylmethionine synthase (384 aa).

H15 contacts ATP. Mg(2+) is bound at residue D17. E43 is a binding site for K(+). Residues E56 and Q99 each coordinate L-methionine. The tract at residues 99-109 (QSADINQGVDR) is flexible loop. ATP is bound by residues 164–166 (DAK), 230–231 (RF), D239, 245–246 (RK), A262, and K266. Residue D239 coordinates L-methionine. Residue K270 participates in L-methionine binding.

Belongs to the AdoMet synthase family. As to quaternary structure, homotetramer; dimer of dimers. It depends on Mg(2+) as a cofactor. Requires K(+) as cofactor.

It localises to the cytoplasm. The enzyme catalyses L-methionine + ATP + H2O = S-adenosyl-L-methionine + phosphate + diphosphate. The protein operates within amino-acid biosynthesis; S-adenosyl-L-methionine biosynthesis; S-adenosyl-L-methionine from L-methionine: step 1/1. Catalyzes the formation of S-adenosylmethionine (AdoMet) from methionine and ATP. The overall synthetic reaction is composed of two sequential steps, AdoMet formation and the subsequent tripolyphosphate hydrolysis which occurs prior to release of AdoMet from the enzyme. In Haemophilus influenzae (strain PittGG), this protein is S-adenosylmethionine synthase.